A 184-amino-acid polypeptide reads, in one-letter code: Tumor necrosis factor alpha-induced protein 8-like protein 2 (184 aa).

A Phosphoserine modification is found at serine 3.

Belongs to the TNFAIP8 family. TNFAIP8L2 subfamily. In terms of assembly, may interact with CASP8; however, such result is unclear since could not reproduce the interaction with CASP8. Interacts with RAC1. Phosphorylated by TAK1/MAP3K7; this phosphorylation triggers association with BTRC and subsequent ubiquitination and degradation. In terms of processing, ubiquitinated in a BTRC-depdent manner; leading to degradation mediated through the proteasome pathway.

It is found in the cytoplasm. Its subcellular location is the nucleus. The protein resides in the lysosome. Acts as a negative regulator of innate and adaptive immunity by maintaining immune homeostasis. Plays a regulatory role in the Toll-like signaling pathway by determining the strength of LPS-induced signaling and gene expression. Inhibits TCR-mediated T-cell activation and negatively regulate T-cell function to prevent hyperresponsiveness. Also inhibits autolysosome formation via negatively modulating MTOR activation by interacting with RAC1 and promoting the disassociation of the RAC1-MTOR complex. Plays an essential role in NK-cell biology by acting as a checkpoint and displaying an expression pattern correlating with NK-cell maturation process and by negatively regulating NK-cell maturation and antitumor immunity. Mechanistically, suppresses IL-15-triggered mTOR activity in NK-cells. The polypeptide is Tumor necrosis factor alpha-induced protein 8-like protein 2 (TNFAIP8L2) (Callithrix jacchus (White-tufted-ear marmoset)).